Reading from the N-terminus, the 79-residue chain is Large ribosomal subunit protein uL29 (79 aa).

This sequence belongs to the universal ribosomal protein uL29 family.

The polypeptide is Large ribosomal subunit protein uL29 (Gluconacetobacter diazotrophicus (strain ATCC 49037 / DSM 5601 / CCUG 37298 / CIP 103539 / LMG 7603 / PAl5)).